Consider the following 504-residue polypeptide: ATP-dependent rRNA helicase RRP3 (504 aa).

A compositionally biased stretch (low complexity) spans 34 to 62 (ASASSAASTKESLPVSETISISTSETPVS). Residues 34–99 (ASASSAASTK…SSSSPPSVQS (66 aa)) are disordered. Residues 68–79 (SNKEDLSTKKDQ) show a composition bias toward basic and acidic residues. Residues 80-99 (SSASSSSSTSSSSSPPSVQS) are compositionally biased toward low complexity. The Q motif signature appears at 98–126 (QSFTEFDLVPELLESIQSLKYTQPTPIQA). One can recognise a Helicase ATP-binding domain in the interval 129–301 (IPHALQGKDI…RSLNSPVQVE (173 aa)). 142–149 (AETGSGKT) serves as a coordination point for ATP. The short motif at 248–251 (DEVD) is the DEAD box element. Residues 327 to 471 (RLIQIVNLDS…DLPLDEMQGL (145 aa)) form the Helicase C-terminal domain.

This sequence belongs to the DEAD box helicase family. DDX47/RRP3 subfamily. Interacts with the SSU processome.

It localises to the nucleus. It carries out the reaction ATP + H2O = ADP + phosphate + H(+). Functionally, ATP-dependent rRNA helicase required for pre-ribosomal RNA processing. Involved in the maturation of the 35S-pre-rRNA and to its cleavage to mature 18S rRNA. The protein is ATP-dependent rRNA helicase RRP3 of Lodderomyces elongisporus (strain ATCC 11503 / CBS 2605 / JCM 1781 / NBRC 1676 / NRRL YB-4239) (Yeast).